Here is a 130-residue protein sequence, read N- to C-terminus: Flagellar assembly factor FliW (130 aa).

It belongs to the FliW family. In terms of assembly, interacts with translational regulator CsrA and flagellin(s).

It localises to the cytoplasm. Functionally, acts as an anti-CsrA protein, binds CsrA and prevents it from repressing translation of its target genes, one of which is flagellin. Binds to flagellin and participates in the assembly of the flagellum. The polypeptide is Flagellar assembly factor FliW (Borrelia duttonii (strain Ly)).